A 308-amino-acid chain; its full sequence is GMP synthase [glutamine-hydrolyzing] subunit B (308 aa).

Residues 2 to 183 (LNPSDFIEEA…LGLPREMIQR (182 aa)) enclose the GMPS ATP-PPase domain. ATP is bound at residue 29-35 (SGGVDSS).

Heterodimer composed of a glutamine amidotransferase subunit (A) and a GMP-binding subunit (B).

The catalysed reaction is XMP + L-glutamine + ATP + H2O = GMP + L-glutamate + AMP + diphosphate + 2 H(+). It functions in the pathway purine metabolism; GMP biosynthesis; GMP from XMP (L-Gln route): step 1/1. Functionally, catalyzes the synthesis of GMP from XMP. The protein is GMP synthase [glutamine-hydrolyzing] subunit B (guaAB) of Methanothermobacter thermautotrophicus (strain ATCC 29096 / DSM 1053 / JCM 10044 / NBRC 100330 / Delta H) (Methanobacterium thermoautotrophicum).